The primary structure comprises 296 residues: 4-hydroxybenzoate octaprenyltransferase (296 aa).

A run of 8 helical transmembrane segments spans residues 28–48 (PIGI…AGNG), 52–72 (LANV…GCCI), 102–122 (ALTL…CTNS), 145–167 (TYYP…FTAA), 174–196 (GAWL…YAMV), 219–239 (SIIL…GSRF), 241–261 (LGGW…WEYW), and 275–295 (FLHN…DYAL).

It belongs to the UbiA prenyltransferase family. The cofactor is Mg(2+).

Its subcellular location is the cell inner membrane. The catalysed reaction is all-trans-octaprenyl diphosphate + 4-hydroxybenzoate = 4-hydroxy-3-(all-trans-octaprenyl)benzoate + diphosphate. It functions in the pathway cofactor biosynthesis; ubiquinone biosynthesis. Functionally, catalyzes the prenylation of para-hydroxybenzoate (PHB) with an all-trans polyprenyl group. Mediates the second step in the final reaction sequence of ubiquinone-8 (UQ-8) biosynthesis, which is the condensation of the polyisoprenoid side chain with PHB, generating the first membrane-bound Q intermediate 3-octaprenyl-4-hydroxybenzoate. In Pseudomonas putida (strain ATCC 700007 / DSM 6899 / JCM 31910 / BCRC 17059 / LMG 24140 / F1), this protein is 4-hydroxybenzoate octaprenyltransferase.